A 408-amino-acid chain; its full sequence is Peptidase T (408 aa).

Residue His78 coordinates Zn(2+). Asp80 is a catalytic residue. Asp140 is a Zn(2+) binding site. Glu174 acts as the Proton acceptor in catalysis. Residues Glu175, Asp197, and His379 each coordinate Zn(2+).

It belongs to the peptidase M20B family. The cofactor is Zn(2+).

The protein localises to the cytoplasm. It carries out the reaction Release of the N-terminal residue from a tripeptide.. Its function is as follows. Cleaves the N-terminal amino acid of tripeptides. In Staphylococcus aureus (strain MRSA252), this protein is Peptidase T.